The sequence spans 291 residues: tRNA N(3)-cytidine methyltransferase METTL8, mitochondrial (291 aa).

The transit peptide at 1–21 (MNMIWRNSISCLRLGKVPHRY) directs the protein to the mitochondrion. A Glycyl lysine isopeptide (Lys-Gly) (interchain with G-Cter in SUMO) cross-link involves residue K80. Residues W89 and Y93 each coordinate S-adenosyl-L-methionine. Residues 141–187 (FSRMHCPTVPDEKNHYEKSSGSSEGQSKTESDFSNLDSEKHKKGPME) form a disordered region. Residues 159 to 168 (SSGSSEGQSK) show a composition bias toward low complexity. Residues G204, D230, and D256 each contribute to the S-adenosyl-L-methionine site.

It belongs to the methyltransferase superfamily. METL family. As to quaternary structure, interacts with EP300.

Its subcellular location is the mitochondrion. The enzyme catalyses cytidine(32) in tRNA(Ser) + S-adenosyl-L-methionine = N(3)-methylcytidine(32) in tRNA(Ser) + S-adenosyl-L-homocysteine + H(+). It catalyses the reaction cytidine(32) in tRNA(Thr) + S-adenosyl-L-methionine = N(3)-methylcytidine(32) in tRNA(Thr) + S-adenosyl-L-homocysteine + H(+). It carries out the reaction a cytidine in mRNA + S-adenosyl-L-methionine = an N(3)-methylcytidine in mRNA + S-adenosyl-L-homocysteine + H(+). Mitochondrial S-adenosyl-L-methionine-dependent methyltransferase that mediates N(3)-methylcytidine modification of residue 32 of the tRNA anticodon loop of mitochondrial tRNA(Ser)(UCN) and tRNA(Thr). N(3)-methylcytidine methylation modification regulates mitochondrial translation efficiency and is required for activity of the respiratory chain. N(3)-methylcytidine methylation of mitochondrial tRNA(Ser)(UCN) requires the formation of N(6)-dimethylallyladenosine(37) (i6A37) by TRIT1 as prerequisite. May also mediate N(3)-methylcytidine modification of mRNAs. The existence of N(3)-methylcytidine modification on mRNAs is however unclear, and additional evidences are required to confirm the role of the N(3)-methylcytidine-specific mRNA methyltransferase activity of METTL8 in vivo. The polypeptide is tRNA N(3)-cytidine methyltransferase METTL8, mitochondrial (Homo sapiens (Human)).